Consider the following 284-residue polypeptide: MNELTGESGSAAPSIALNDENTMPVLGLGVAELSDDETERAVSAALEVGCRLIDTAAAYGNEAAVGRAIAASGIPRAELFVTTKLATSDQGFKGAMDACEASLERLGLDYVDLYLIHWPAPALGTYVNSFGGMIQSRGNGHARSIGVSNFTEEYLTTVIDLTFVTPAVNQIELHPLLNQEALRKTNAEHNVVTQSYTPLALGKLNDHPTVNSVAAEYGKTASQVLLRWNLQLGNAVIFRSANAEHIASDFDVFDFELAAEHMDAINALNDGTRLRPDPDTYEGS.

Tyr-59 serves as the catalytic Proton donor. NADPH is bound by residues Leu-199, Ile-237, Arg-239, Ser-240, Ala-241, Ser-248, and Arg-275.

Belongs to the aldo/keto reductase family.

The sequence is that of Aldo-keto reductase MAV_3816 from Mycobacterium avium (strain 104).